We begin with the raw amino-acid sequence, 90 residues long: FMRFamide-like neuropeptides 27 (90 aa).

The signal sequence occupies residues methionine 1–alanine 24. Positions glutamine 25 to glutamate 36 are excised as a propeptide. Phenylalanine 61 is modified (phenylalanine amide). Residues serine 65–leucine 90 constitute a propeptide that is removed on maturation.

Belongs to the FARP (FMRFamide related peptide) family.

The protein localises to the secreted. In terms of biological role, FMRFamides and FMRFamide-like peptides are neuropeptides. This is FMRFamide-like neuropeptides 27 from Caenorhabditis briggsae.